A 552-amino-acid polypeptide reads, in one-letter code: MPSARLQQQFIRLWQCCEGKSQDTTLNELAALLSCSRRHMRTLLNTMQDRGWLTWEAEVGRGKRSRLTFLYTGLALQQQRAEDLLEQDRIDQLVQLVGDKATVRQMLVSHLGRSFRQGRHILRVLYYRPLRNLLPGSALRRSETHIARQIFSSLTRINEENGELEADIAHHWQQISPLHWRFFLRPGVHFHHGRELEMDDVIASLKRINTLPLYSHIADIVSPTPWTLDIHLTQPDRWLPLLLGQVPAMILPREWETLSNFASHPIGTGPYAVIRNSTNQLKIQAFDDFFGYRALIDEVNVWVLPEIADEPAGGLMLKGPQGEEKEIESRLEEGCYYLLFDSRTHRGANQQVRDWVSYVLSPTNLVYFAEEQYQQLWFPAYGLLPRWHHARTITSEKPAGLESLTLTFYQDHSEHRVIAGIMQQILASHQVTLEIKEISYDQWHEGEIESDIWLNSANFTLPLDFSLFAHLCEVPLLQHCIPIDWQVDAARWRNGEMNLANWCQQLVASKAMVPLIHHWLIIQGQRSMRGLRMNTLGWFDFKSAWFAPPDPE.

The HTH marR-type domain maps to 1–116; that stretch reads MPSARLQQQF…LVSHLGRSFR (116 aa). Residues 26–49 constitute a DNA-binding region (H-T-H motif); sequence LNELAALLSCSRRHMRTLLNTMQD. Positions 163–492 are solute-binding; sequence ELEADIAHHW…IDWQVDAARW (330 aa).

In terms of biological role, activates the small RNA gene sgrS under glucose-phosphate stress conditions as well as yfdZ. Represses its own transcription under both stress and non-stress conditions. Might act as a sensor of the intracellular accumulation of phosphoglucose by binding these molecules in its C-terminal solute-binding domain. The polypeptide is HTH-type transcriptional regulator SgrR (Escherichia coli O157:H7).